We begin with the raw amino-acid sequence, 208 residues long: Small ribosomal subunit protein uS4 (208 aa).

The region spanning 98-160 (SRLDNVAYNM…AKSYLRIKSS (63 aa)) is the S4 RNA-binding domain.

Belongs to the universal ribosomal protein uS4 family. In terms of assembly, part of the 30S ribosomal subunit. Contacts protein S5. The interaction surface between S4 and S5 is involved in control of translational fidelity.

Its function is as follows. One of the primary rRNA binding proteins, it binds directly to 16S rRNA where it nucleates assembly of the body of the 30S subunit. In terms of biological role, with S5 and S12 plays an important role in translational accuracy. The sequence is that of Small ribosomal subunit protein uS4 from Nitrosomonas eutropha (strain DSM 101675 / C91 / Nm57).